Consider the following 256-residue polypeptide: ATP synthase subunit a (256 aa).

Residues 1–8 (MYQFNFIL) constitute a propeptide, removed in mature form. Transmembrane regions (helical) follow at residues 34 to 54 (ITNIGLYLSIGLLLTLGYHLL), 92 to 112 (YFPFIYALFIFILVNNLIGMV), 121 to 141 (HFILTFSMSFTIVLGATFLGL), 148 to 168 (FFSLFVPSGCPLGLLPLLVLI), 186 to 206 (ANILSGHMLLSILSGFTYNIM), 209 to 229 (GILFFFLGLIPLAFIIAFSGL), and 230 to 250 (ELAIAFIQAQVFVVLTCSYIK).

It belongs to the ATPase A chain family. In terms of assembly, F-type ATPases have 2 components, CF(1) - the catalytic core - and CF(0) - the membrane proton channel. CF(1) has five subunits: alpha(3), beta(3), gamma(1), delta(1), epsilon(1). CF(0) has three main subunits: a, b and c.

Its subcellular location is the mitochondrion inner membrane. In terms of biological role, mitochondrial membrane ATP synthase (F(1)F(0) ATP synthase or Complex V) produces ATP from ADP in the presence of a proton gradient across the membrane which is generated by electron transport complexes of the respiratory chain. F-type ATPases consist of two structural domains, F(1) - containing the extramembraneous catalytic core and F(0) - containing the membrane proton channel, linked together by a central stalk and a peripheral stalk. During catalysis, ATP synthesis in the catalytic domain of F(1) is coupled via a rotary mechanism of the central stalk subunits to proton translocation. Key component of the proton channel; it may play a direct role in the translocation of protons across the membrane. The chain is ATP synthase subunit a (atp6) from Emericella nidulans (Aspergillus nidulans).